The chain runs to 94 residues: Beta-diguetoxin-Dc1a (94 aa).

The N-terminal stretch at 1–17 (MKVFVVLLCLSLAAVYA) is a signal peptide. Positions 18–38 (LEERLDKDADIMLDSPADMER) are excised as a propeptide. 4 disulfides stabilise this stretch: cysteine 50–cysteine 63, cysteine 57–cysteine 77, cysteine 62–cysteine 91, and cysteine 79–cysteine 89.

Belongs to the neurotoxin 26 (DTX) family. Expressed by the venom gland.

It is found in the secreted. Its function is as follows. Insecticidal toxin. This toxin promotes opening of insect Nav channels. The toxin binds to the S1-S2 and S3-S4 loops in the domain II voltage-sensor of insect Nav channels (i.e., receptor site 4). The American cockroach P.americana is largely resistant to the effects of this toxin due to an unusual sequence within the domain II S1-S2 loop. In vivo, paralyzes lepidopteran and dipteran larvae. Paralyzed insects ultimately die from secondary effects of starvation and dehydration. The polypeptide is Beta-diguetoxin-Dc1a (Diguetia canities (Desert bush spider)).